A 195-amino-acid chain; its full sequence is MARCKS-related protein (195 aa).

The segment at methionine 1–glutamate 195 is disordered. Glycine 2 is lipidated: N-myristoyl glycine. Threonine 14 carries the post-translational modification Phosphothreonine. Residues glutamate 16 to alanine 26 show a composition bias toward low complexity. A phosphoserine mark is found at serine 22, serine 36, serine 41, and serine 48. Residues glycine 53–alanine 64 are compositionally biased toward low complexity. At serine 71 the chain carries Phosphoserine. The segment covering alanine 76 to threonine 85 has biased composition (basic and acidic residues). Position 85 is a phosphothreonine (threonine 85). Over residues proline 86–phenylalanine 98 the composition is skewed to basic residues. The tract at residues lysine 87–lysine 110 is effector domain involved in lipid-binding and calmodulin-binding. Phosphoserine is present on residues serine 93, serine 101, serine 104, serine 119, serine 120, and serine 135. Threonine 148 carries the post-translational modification Phosphothreonine. Phosphoserine occurs at positions 151, 162, and 165. Residues glutamate 153 to glutamate 195 show a composition bias toward low complexity. Threonine 178 and threonine 187 each carry phosphothreonine.

This sequence belongs to the MARCKS family. Binds to filamentous actin (F-actin), but not to monomeric G-actin, independently of its phosphorylation status. Post-translationally, phosphorylated. Phosphorylation at Ser-120 and Thr-178 is non-redundantly catalyzed by MAPK8 in vivo. Phosphorylation at Thr-148 is preferentially catalyzed by MAPK8 in vivo, but this modification can also be catalyzed by other kinases in the absence of MAPK8. May be phosphorylated by protein kinase C, which disrupts the interaction with calmodulin.

Its subcellular location is the cytoplasm. It localises to the cytoskeleton. The protein localises to the cell membrane. Controls cell movement by regulating actin cytoskeleton homeostasis and filopodium and lamellipodium formation. When unphosphorylated, induces cell migration. When phosphorylated by MAPK8, induces actin bundles formation and stabilization, thereby reducing actin plasticity, hence restricting cell movement, including neuronal migration. May be involved in coupling the protein kinase C and calmodulin signal transduction systems. This chain is MARCKS-related protein (MARCKSL1), found in Homo sapiens (Human).